The sequence spans 986 residues: P3N-PIPO polyprotein (986 aa).

One can recognise a Peptidase S30 domain in the interval 141-284; the sequence is KLTEGQMNHL…QSILNSMIQF (144 aa). Residues H192, D201, and S235 each act as for P1 proteinase activity in the active site. The short motif at 334 to 337 is the Involved in interaction with stylet and aphid transmission element; it reads KITC. Residues 592–594 carry the Involved in virions binding and aphid transmission motif; sequence PTK. Positions 618–740 constitute a Peptidase C6 domain; it reads LYIAKQGYCY…ESDIKHYRVG (123 aa). Active-site for helper component proteinase activity residues include C626 and H699.

This sequence belongs to the potyviridae P3N-PIPO polyprotein family. As to quaternary structure, interacts (via PIPO domain) with host PCaP1 protein; this interaction may help to anchor the movement complex to the plasma membrane from which the complex could move to the plasmodesmata. In terms of processing, potyviral RNA is expressed as two polyproteins which undergo post-translational proteolytic processing. Genome polyprotein is processed by NIa-pro, P1 and HC-pro proteinases resulting in the production of at least ten individual proteins. P3N-PIPO is cleaved by P1 and HC-pro proteinases resulting in the production of three individual proteins. The P1 proteinase and the HC-pro cleave only their respective C-termini autocatalytically.

It localises to the host cell junction. It is found in the host plasmodesma. The catalysed reaction is Hydrolyzes a Gly-|-Gly bond at its own C-terminus, commonly in the sequence -Tyr-Xaa-Val-Gly-|-Gly, in the processing of the potyviral polyprotein.. Functionally, required for aphid transmission and also has proteolytic activity. Only cleaves a Gly-Gly dipeptide at its own C-terminus. Interacts with virions and aphid stylets. Acts as a suppressor of RNA-mediated gene silencing, also known as post-transcriptional gene silencing (PTGS), a mechanism of plant viral defense that limits the accumulation of viral RNAs. May have RNA-binding activity. Its function is as follows. Allows efficient cell to cell propagation, by bypassing the host cell wall barrier. Transports viral genome to neighboring plant cells directly through plasmosdesmata, without any budding. This Potato virus Y (strain N) (PVY) protein is P3N-PIPO polyprotein.